A 510-amino-acid chain; its full sequence is NAD(P)H-quinone oxidoreductase subunit 2 B, chloroplastic (510 aa).

Helical transmembrane passes span 24-44, 57-77, 99-119, 124-144, 149-169, 183-203, 227-247, 295-315, 323-343, 354-374, 395-415, 418-438, and 484-504; these read LLFF…GLIL, IPWL…ALLF, IFQF…VEYI, MAIT…MFLC, LITI…LSGY, YLLM…WLYG, PGIS…LSPA, WHLL…LIAI, MLAY…IVGD, YMLF…LFGL, ALSL…AGFF, LYLF…IGLL, and MIVC…IIAI.

The protein belongs to the complex I subunit 2 family. As to quaternary structure, NDH is composed of at least 16 different subunits, 5 of which are encoded in the nucleus.

It localises to the plastid. It is found in the chloroplast thylakoid membrane. The enzyme catalyses a plastoquinone + NADH + (n+1) H(+)(in) = a plastoquinol + NAD(+) + n H(+)(out). It carries out the reaction a plastoquinone + NADPH + (n+1) H(+)(in) = a plastoquinol + NADP(+) + n H(+)(out). In terms of biological role, NDH shuttles electrons from NAD(P)H:plastoquinone, via FMN and iron-sulfur (Fe-S) centers, to quinones in the photosynthetic chain and possibly in a chloroplast respiratory chain. The immediate electron acceptor for the enzyme in this species is believed to be plastoquinone. Couples the redox reaction to proton translocation, and thus conserves the redox energy in a proton gradient. This is NAD(P)H-quinone oxidoreductase subunit 2 B, chloroplastic from Guizotia abyssinica (Niger).